The sequence spans 88 residues: Small ribosomal subunit protein bS20 (88 aa).

Residues 1–21 are disordered; it reads MANSAQAKKRARQNVKARKHN. Residues 7 to 21 show a composition bias toward basic residues; the sequence is AKKRARQNVKARKHN.

It belongs to the bacterial ribosomal protein bS20 family.

Its function is as follows. Binds directly to 16S ribosomal RNA. In Acinetobacter baumannii (strain AB307-0294), this protein is Small ribosomal subunit protein bS20.